The primary structure comprises 476 residues: Cysteine--tRNA ligase (476 aa).

Cys-27 contributes to the Zn(2+) binding site. The 'HIGH' region motif lies at 29–39 (PTTYNYIHLGN). Zn(2+) contacts are provided by Cys-207, His-232, and Glu-236. The 'KMSKS' region signature appears at 264–268 (KMSKS). Lys-267 is a binding site for ATP.

It belongs to the class-I aminoacyl-tRNA synthetase family. Monomer. Zn(2+) is required as a cofactor.

It is found in the cytoplasm. The catalysed reaction is tRNA(Cys) + L-cysteine + ATP = L-cysteinyl-tRNA(Cys) + AMP + diphosphate. This is Cysteine--tRNA ligase from Moorella thermoacetica (strain ATCC 39073 / JCM 9320).